A 173-amino-acid polypeptide reads, in one-letter code: MKTKEIVDDVTMKRAITRITYEIIERNKQLDNVVLAGIKTRGVFLARRIQERLHQLEGLDLPIGELDIKPFRDDMRVEEDTTLMSVDITGKDVILIDDVLYTGRTIRAAIDNLVSLGRPARVSLAVLVDRGHRELPIRADYVGKNIPTSSVEEIVVEVVEVDGRDRVSIIDPT.

The PRPP-binding motif lies at 93-105; sequence VILIDDVLYTGRT.

It belongs to the purine/pyrimidine phosphoribosyltransferase family. PyrR subfamily. In terms of assembly, homodimer and homohexamer; in equilibrium.

The catalysed reaction is UMP + diphosphate = 5-phospho-alpha-D-ribose 1-diphosphate + uracil. Functionally, regulates transcriptional attenuation of the pyrimidine nucleotide (pyr) operon by binding in a uridine-dependent manner to specific sites on pyr mRNA. This disrupts an antiterminator hairpin in the RNA and favors formation of a downstream transcription terminator, leading to a reduced expression of downstream genes. Also displays a weak uracil phosphoribosyltransferase activity which is not physiologically significant. In Streptococcus pyogenes serotype M12 (strain MGAS2096), this protein is Bifunctional protein PyrR.